The sequence spans 115 residues: T cell receptor beta variable 7-6 (115 aa).

The first 21 residues, 1 to 21 (MGTSLLCWVVLGFLGTDHTGA), serve as a signal peptide directing secretion. One can recognise an Ig-like domain in the interval 22–115 (GVSQSPRYKV…SAMYRCASSL (94 aa)). The cysteines at positions 42 and 111 are disulfide-linked.

In terms of assembly, alpha-beta TR is a heterodimer composed of an alpha and beta chain; disulfide-linked. The alpha-beta TR is associated with the transmembrane signaling CD3 coreceptor proteins to form the TR-CD3 (TcR or TCR). The assembly of alpha-beta TR heterodimers with CD3 occurs in the endoplasmic reticulum where a single alpha-beta TR heterodimer associates with one CD3D-CD3E heterodimer, one CD3G-CD3E heterodimer and one CD247 homodimer forming a stable octameric structure. CD3D-CD3E and CD3G-CD3E heterodimers preferentially associate with TR alpha and TR beta chains, respectively. The association of the CD247 homodimer is the last step of TcR assembly in the endoplasmic reticulum and is required for transport to the cell surface.

The protein resides in the cell membrane. In terms of biological role, v region of the variable domain of T cell receptor (TR) beta chain that participates in the antigen recognition. Alpha-beta T cell receptors are antigen specific receptors which are essential to the immune response and are present on the cell surface of T lymphocytes. Recognize peptide-major histocompatibility (MH) (pMH) complexes that are displayed by antigen presenting cells (APC), a prerequisite for efficient T cell adaptive immunity against pathogens. Binding of alpha-beta TR to pMH complex initiates TR-CD3 clustering on the cell surface and intracellular activation of LCK that phosphorylates the ITAM motifs of CD3G, CD3D, CD3E and CD247 enabling the recruitment of ZAP70. In turn ZAP70 phosphorylates LAT, which recruits numerous signaling molecules to form the LAT signalosome. The LAT signalosome propagates signal branching to three major signaling pathways, the calcium, the mitogen-activated protein kinase (MAPK) kinase and the nuclear factor NF-kappa-B (NF-kB) pathways, leading to the mobilization of transcription factors that are critical for gene expression and essential for T cell growth and differentiation. The T cell repertoire is generated in the thymus, by V-(D)-J rearrangement. This repertoire is then shaped by intrathymic selection events to generate a peripheral T cell pool of self-MH restricted, non-autoaggressive T cells. Post-thymic interaction of alpha-beta TR with the pMH complexes shapes TR structural and functional avidity. In Homo sapiens (Human), this protein is T cell receptor beta variable 7-6.